The sequence spans 860 residues: Leucine--tRNA ligase (860 aa).

Residues 42 to 52 (PYPSGRLHMGH) carry the 'HIGH' region motif. The 'KMSKS' region signature appears at 619-623 (KMSKS). Lys-622 provides a ligand contact to ATP.

The protein belongs to the class-I aminoacyl-tRNA synthetase family.

Its subcellular location is the cytoplasm. It catalyses the reaction tRNA(Leu) + L-leucine + ATP = L-leucyl-tRNA(Leu) + AMP + diphosphate. The sequence is that of Leucine--tRNA ligase from Escherichia coli (strain K12 / MC4100 / BW2952).